The sequence spans 474 residues: 3-isopropylmalate dehydratase large subunit (474 aa).

Residues Cys353, Cys414, and Cys417 each coordinate [4Fe-4S] cluster.

This sequence belongs to the aconitase/IPM isomerase family. LeuC type 1 subfamily. As to quaternary structure, heterodimer of LeuC and LeuD. The cofactor is [4Fe-4S] cluster.

The enzyme catalyses (2R,3S)-3-isopropylmalate = (2S)-2-isopropylmalate. The protein operates within amino-acid biosynthesis; L-leucine biosynthesis; L-leucine from 3-methyl-2-oxobutanoate: step 2/4. Catalyzes the isomerization between 2-isopropylmalate and 3-isopropylmalate, via the formation of 2-isopropylmaleate. This Xylella fastidiosa (strain M23) protein is 3-isopropylmalate dehydratase large subunit.